A 262-amino-acid chain; its full sequence is Acyl-[acyl-carrier-protein]--UDP-N-acetylglucosamine O-acyltransferase (262 aa).

The protein belongs to the transferase hexapeptide repeat family. LpxA subfamily. In terms of assembly, homotrimer.

It localises to the cytoplasm. The enzyme catalyses a (3R)-hydroxyacyl-[ACP] + UDP-N-acetyl-alpha-D-glucosamine = a UDP-3-O-[(3R)-3-hydroxyacyl]-N-acetyl-alpha-D-glucosamine + holo-[ACP]. It functions in the pathway glycolipid biosynthesis; lipid IV(A) biosynthesis; lipid IV(A) from (3R)-3-hydroxytetradecanoyl-[acyl-carrier-protein] and UDP-N-acetyl-alpha-D-glucosamine: step 1/6. In terms of biological role, involved in the biosynthesis of lipid A, a phosphorylated glycolipid that anchors the lipopolysaccharide to the outer membrane of the cell. This chain is Acyl-[acyl-carrier-protein]--UDP-N-acetylglucosamine O-acyltransferase, found in Sodalis glossinidius (strain morsitans).